A 131-amino-acid polypeptide reads, in one-letter code: MSEIPADLSYTTEHEWVQRTGDGTVRVGITDYAQSALGDVVFVQLPDVGSDVTAGESFGEVESTKSVSDLYAPVTAKVIAVNGDLEGNPQLVNSDPYGEGWLVELQTETESMQAGLASLLDAEGYRAHVAD.

The region spanning T24–Q106 is the Lipoyl-binding domain. Position 65 is an N6-lipoyllysine (K65).

Belongs to the GcvH family. The glycine cleavage system is composed of four proteins: P, T, L and H. The cofactor is (R)-lipoate.

Functionally, the glycine cleavage system catalyzes the degradation of glycine. The H protein shuttles the methylamine group of glycine from the P protein to the T protein. The chain is Glycine cleavage system H protein from Mycolicibacterium vanbaalenii (strain DSM 7251 / JCM 13017 / BCRC 16820 / KCTC 9966 / NRRL B-24157 / PYR-1) (Mycobacterium vanbaalenii).